A 231-amino-acid polypeptide reads, in one-letter code: Putative cobalt transport protein CbiM 2 (231 aa).

6 helical membrane-spanning segments follow: residues 8–28 (LPIG…IYGI), 41–61 (VLPL…LKIP), 75–95 (LSAA…VLLF), 108–128 (LGAN…LVFV), 136–156 (VGIG…TYTV), and 176–196 (IAFA…EGII).

It belongs to the CbiM family. Forms an energy-coupling factor (ECF) transporter complex composed of an ATP-binding protein (A component, CbiO), a transmembrane protein (T component, CbiQ) and 2 possible substrate-capture proteins (S components, CbiM and CbiN) of unknown stoichimetry.

It is found in the cell membrane. It participates in cofactor biosynthesis; adenosylcobalamin biosynthesis. Functionally, part of the energy-coupling factor (ECF) transporter complex CbiMNOQ involved in cobalt import. This is Putative cobalt transport protein CbiM 2 from Methanocorpusculum labreanum (strain ATCC 43576 / DSM 4855 / Z).